We begin with the raw amino-acid sequence, 107 residues long: Ig kappa chain V-VI region NQ5-78.2.6 (107 aa).

The tract at residues 1–23 (QILLTQSPAIMSASPGQKVTMTC) is framework-1. A disulfide bridge links cysteine 23 with cysteine 87. The interval 24–33 (SASSSVSYMH) is complementarity-determining-1. Residues 34–48 (WYQQKSGTSPKRWIY) are framework-2. The complementarity-determining-2 stretch occupies residues 49–55 (DTSKLAS). The segment at 56-87 (GVPARFXGSGSATSYSLTITSMQAEDAATYYC) is framework-3. A complementarity-determining-3 region spans residues 88 to 96 (QQWSSNPLT). The tract at residues 97–106 (FGSGTKLEXK) is framework-4.

Functionally, anti-2-phenyl oxazolone (PHOX) Antibody. This Mus musculus (Mouse) protein is Ig kappa chain V-VI region NQ5-78.2.6.